Reading from the N-terminus, the 1064-residue chain is Adenylate cyclase type 4 (1064 aa).

The Cytoplasmic segment spans residues 1-28 (MARLFSPRPPPSEDLFYETYYSLSQQYP). The next 6 membrane-spanning stretches (helical) occupy residues 29-50 (LLIL…VAWA), 61-80 (FLTT…GLAS), 94-117 (GLIW…VSAW), 120-138 (VSFF…PLGM), 141-162 (AAAA…YLGW), and 170-190 (LLPQ…VGAY). The Cytoplasmic portion of the chain corresponds to 191 to 582 (HKALMERALR…YRLSALPAFK (392 aa)). 3 residues coordinate Mg(2+): D278, I279, and D322. ATP-binding positions include 278–283 (DIVGFT), 320–322 (LGD), and R366. A disordered region spans residues 498-523 (DSPASTSTPLPEKAFSPQWSLDRSRT). S517 carries the post-translational modification Phosphoserine. T533 carries the post-translational modification Phosphothreonine. Transmembrane regions (helical) follow at residues 583 to 604 (YYAA…LVTT), 608 to 630 (ALAT…CFSE), and 661 to 684 (VALG…FLPV). Over 685 to 707 (SSDCPFLAPNVSSVAFNTSWELP) the chain is Extracellular. 2 N-linked (GlcNAc...) asparagine glycosylation sites follow: N694 and N701. Transmembrane regions (helical) follow at residues 708–733 (ASLP…SLFL), 741–761 (LLLL…SHAW), and 788–804 (MGAI…LVLA). Topologically, residues 805–1064 (RQNEYYCRLD…LTRTGSPSAS (260 aa)) are cytoplasmic. ATP is bound by residues K914, 994 to 996 (DIW), 1001 to 1005 (NVASR), and K1041.

This sequence belongs to the adenylyl cyclase class-4/guanylyl cyclase family. The cofactor is Mg(2+). Mn(2+) is required as a cofactor. As to expression, widely distributed.

It is found in the cell membrane. The protein localises to the cytoplasm. It carries out the reaction ATP = 3',5'-cyclic AMP + diphosphate. Its activity is regulated as follows. Activated by forskolin. Insensitive to calcium/calmodulin. Stimulated by GNAS and by the G-protein beta and gamma subunit complex. Its function is as follows. Catalyzes the formation of the signaling molecule cAMP in response to G-protein signaling. The sequence is that of Adenylate cyclase type 4 (Adcy4) from Rattus norvegicus (Rat).